The chain runs to 222 residues: UPF0688 protein C1orf174 homolog (222 aa).

Disordered regions lie at residues 23 to 57 (STSL…RTSK) and 98 to 158 (EDGA…EPVP). Residues 33 to 48 (ASSTSAKTTCLASSSH) show a composition bias toward polar residues. The span at 121–131 (VSEEPSVKAEE) shows a compositional bias: basic and acidic residues. Phosphoserine is present on S172.

It belongs to the UPF0688 family.

It is found in the nucleus. The chain is UPF0688 protein C1orf174 homolog from Rattus norvegicus (Rat).